The primary structure comprises 212 residues: MIFITGTDTGVGKTFVSKIIGKHLKYKENINTGYLKPIESGGIEDTATLKEALNLDENLNILNPVNLKNPLSPNIAAEIENKPIDLVEIKKSFDLLKNKYDFLIIEGAGGVAVPIKYNSFLMSDLIVYLGAPAIIVSRPDLGTINHTLLTIEHLRNKGILVKGVIINCINELDTVLHYEKTFETINRCGNVEIIGIVKNENEYNINFDKIIG.

10 to 15 contributes to the ATP binding site; sequence GVGKTF. Threonine 14 contacts Mg(2+). Lysine 36 is an active-site residue. Serine 40 is a binding site for substrate. Residues aspartate 45, 106 to 109, and 167 to 168 contribute to the ATP site; these read EGAG and NC. Aspartate 45 and glutamate 106 together coordinate Mg(2+).

The protein belongs to the dethiobiotin synthetase family. In terms of assembly, homodimer. It depends on Mg(2+) as a cofactor.

Its subcellular location is the cytoplasm. It catalyses the reaction (7R,8S)-7,8-diammoniononanoate + CO2 + ATP = (4R,5S)-dethiobiotin + ADP + phosphate + 3 H(+). Its pathway is cofactor biosynthesis; biotin biosynthesis; biotin from 7,8-diaminononanoate: step 1/2. Catalyzes a mechanistically unusual reaction, the ATP-dependent insertion of CO2 between the N7 and N8 nitrogen atoms of 7,8-diaminopelargonic acid (DAPA, also called 7,8-diammoniononanoate) to form a ureido ring. This Methanococcus aeolicus (strain ATCC BAA-1280 / DSM 17508 / OCM 812 / Nankai-3) protein is ATP-dependent dethiobiotin synthetase BioD.